The sequence spans 845 residues: Protein arginine N-methyltransferase 9 (845 aa).

TPR repeat units lie at residues 25–58, 67–100, and 101–134; these read VSRS…APEL, QYTL…FPDD, and EVIC…NPDF. 2 SAM-dependent MTase PRMT-type domains span residues 137-466 and 530-845; these read AKEN…YLRI and NIPY…TVKQ.

The protein belongs to the class I-like SAM-binding methyltransferase superfamily. Protein arginine N-methyltransferase family. As to quaternary structure, found in a complex with PRMT9, SF3B2 and SF3B4. Interacts with SF3B2.

The protein localises to the cytoplasm. It catalyses the reaction L-arginyl-[protein] + 2 S-adenosyl-L-methionine = N(omega),N(omega)'-dimethyl-L-arginyl-[protein] + 2 S-adenosyl-L-homocysteine + 2 H(+). Functionally, arginine methyltransferase that can both catalyze the formation of omega-N monomethylarginine (MMA) and symmetrical dimethylarginine (sDMA). Specifically mediates the symmetrical dimethylation of SF3B2. Involved in the regulation of alternative splicing of pre-mRNA. This Homo sapiens (Human) protein is Protein arginine N-methyltransferase 9.